The sequence spans 368 residues: Galactoside 2-alpha-L-fucosyltransferase SEC1 (368 aa).

The tract at residues 1-20 (MWDMRAVAPQRPAAGHPRAG) is disordered. Over 1–31 (MWDMRAVAPQRPAAGHPRAGWPRKLKTAATR) the chain is Cytoplasmic. Residues 32–52 (FWATCPSSSTVCFLFVIFAVS) form a helical membrane-spanning segment. The Lumenal segment spans residues 53–368 (TVFHCHRRLA…NLGQARESHP (316 aa)).

The protein belongs to the glycosyltransferase 11 family. Kidney.

It is found in the golgi apparatus. It localises to the golgi stack membrane. The enzyme catalyses a ganglioside GM1 + GDP-beta-L-fucose = a ganglioside Fuc-GM1 + GDP + H(+). It functions in the pathway protein modification; protein glycosylation. Functionally, catalyzes the transfer of alpha 1,2-linked fucose to ganglioside GM1 and galacto-N-biose. This is Galactoside 2-alpha-L-fucosyltransferase SEC1 from Bos taurus (Bovine).